The chain runs to 210 residues: ATP-dependent dethiobiotin synthetase BioD (210 aa).

Asparagine 12 to histidine 17 serves as a coordination point for ATP. Threonine 16 provides a ligand contact to Mg(2+). Lysine 37 is a catalytic residue. Threonine 41 is a binding site for substrate. Glutamate 114 is a binding site for Mg(2+). Glutamate 114–glycine 117 contacts ATP.

Belongs to the dethiobiotin synthetase family. Homodimer. The cofactor is Mg(2+).

It localises to the cytoplasm. It carries out the reaction (7R,8S)-7,8-diammoniononanoate + CO2 + ATP = (4R,5S)-dethiobiotin + ADP + phosphate + 3 H(+). It participates in cofactor biosynthesis; biotin biosynthesis; biotin from 7,8-diaminononanoate: step 1/2. In terms of biological role, catalyzes a mechanistically unusual reaction, the ATP-dependent insertion of CO2 between the N7 and N8 nitrogen atoms of 7,8-diaminopelargonic acid (DAPA, also called 7,8-diammoniononanoate) to form a ureido ring. This is ATP-dependent dethiobiotin synthetase BioD from Sulfurovum sp. (strain NBC37-1).